The sequence spans 300 residues: Small ribosomal subunit protein uS4m (300 aa).

In terms of domain architecture, S4 RNA-binding spans K146 to K209.

It belongs to the universal ribosomal protein uS4 family.

The protein localises to the mitochondrion. The polypeptide is Small ribosomal subunit protein uS4m (mrps4) (Dictyostelium discoideum (Social amoeba)).